We begin with the raw amino-acid sequence, 469 residues long: C4b-binding protein (469 aa).

A signal peptide spans 1–56; it reads MCAKQQQTLLPTRAAHGRLHRNRDAVAWPFSTLCRVSGPTLFQMTFTAALWVAVFG. 6 Sushi domains span residues 57-117, 118-178, 179-242, 243-301, 302-357, and 358-415; these read KCGP…SCAK, KHCR…ECVI, VKCG…TCEK, IICS…TCEF, DCDL…QCKA, and LCQK…RCEQ. 12 disulfide bridges follow: Cys-58/Cys-103, Cys-88/Cys-115, Cys-120/Cys-160, Cys-146/Cys-176, Cys-181/Cys-223, Cys-209/Cys-240, Cys-245/Cys-287, Cys-273/Cys-299, Cys-303/Cys-343, Cys-329/Cys-355, Cys-359/Cys-400, and Cys-386/Cys-413. Asn-74 is a glycosylation site (N-linked (GlcNAc...) asparagine). Asn-227, Asn-275, and Asn-292 each carry an N-linked (GlcNAc...) asparagine glycan. Asn-366 and Asn-381 each carry an N-linked (GlcNAc...) asparagine glycan. Asn-428 carries an N-linked (GlcNAc...) asparagine glycan.

Homoheptamer; not covalently linked. Mouse lacks the beta chain of C4BP.

The protein localises to the secreted. Functionally, controls the classical pathway of complement activation. It binds as a cofactor to C3b/C4b inactivator (C3bINA), which then hydrolyzes the complement fragment C4b. It also accelerates the degradation of the C4bC2a complex (C3 convertase) by dissociating the complement fragment C2a. Alpha chain binds C4b. It also interacts with serum amyloid P component. The sequence is that of C4b-binding protein (C4bpa) from Mus musculus (Mouse).